Here is a 364-residue protein sequence, read N- to C-terminus: Dual-specificity RNA methyltransferase RlmN (364 aa).

Glutamate 91 serves as the catalytic Proton acceptor. Positions 97–333 (ESDRGTLCIS…VTVRKTRGDD (237 aa)) constitute a Radical SAM core domain. Cysteines 104 and 338 form a disulfide. Positions 111, 115, and 118 each coordinate [4Fe-4S] cluster. S-adenosyl-L-methionine contacts are provided by residues 164 to 165 (GE), serine 196, 218 to 220 (SLH), and asparagine 295. The active-site S-methylcysteine intermediate is the cysteine 338.

Belongs to the radical SAM superfamily. RlmN family. [4Fe-4S] cluster serves as cofactor.

The protein resides in the cytoplasm. It carries out the reaction adenosine(2503) in 23S rRNA + 2 reduced [2Fe-2S]-[ferredoxin] + 2 S-adenosyl-L-methionine = 2-methyladenosine(2503) in 23S rRNA + 5'-deoxyadenosine + L-methionine + 2 oxidized [2Fe-2S]-[ferredoxin] + S-adenosyl-L-homocysteine. The catalysed reaction is adenosine(37) in tRNA + 2 reduced [2Fe-2S]-[ferredoxin] + 2 S-adenosyl-L-methionine = 2-methyladenosine(37) in tRNA + 5'-deoxyadenosine + L-methionine + 2 oxidized [2Fe-2S]-[ferredoxin] + S-adenosyl-L-homocysteine. In terms of biological role, specifically methylates position 2 of adenine 2503 in 23S rRNA and position 2 of adenine 37 in tRNAs. m2A2503 modification seems to play a crucial role in the proofreading step occurring at the peptidyl transferase center and thus would serve to optimize ribosomal fidelity. The polypeptide is Dual-specificity RNA methyltransferase RlmN (Neisseria gonorrhoeae (strain ATCC 700825 / FA 1090)).